The sequence spans 104 residues: UPF0213 protein VIBHAR_05350 (104 aa).

Residues 7–82 (QRWSVYLIRN…KQLTKTKKEL (76 aa)) form the GIY-YIG domain.

Belongs to the UPF0213 family.

The sequence is that of UPF0213 protein VIBHAR_05350 from Vibrio campbellii (strain ATCC BAA-1116).